The primary structure comprises 165 residues: Histone H1 (165 aa).

Residues 1–165 form a disordered region; the sequence is GKQSTSKSVT…KKATKGSKKN (165 aa). Residues 9–18 are compositionally biased toward basic and acidic residues; the sequence is VTREKKDVKK. Over residues 20–31 the composition is skewed to basic residues; the sequence is VAPKKAIKKVTK. The span at 32-41 shows a compositional bias: low complexity; it reads KSTTPVKTSK. Residues Thr-48 and Thr-54 each carry the phosphothreonine modification. Over residues 68-89 the composition is skewed to basic and acidic residues; the sequence is TMKESVSDAKKTVHKSAGDKKL. At Ser-83 the chain carries Phosphoserine. Basic residues predominate over residues 103–117; it reads KIVHPAKKAAAKPKT. A Phosphothreonine modification is found at Thr-117. Positions 118-157 are enriched in basic and acidic residues; it reads AKKEVKKDTKPVKKDAKKDTKPVKKDAKKDTKPAKKDTKK.

Cell-growth/division-associated phosphorylation by a CDC2-like kinase. Is additionally phosphorylated on either Ser-33, Thr-34 or Thr-35, and on either Thr-39 or Ser-40.

The protein resides in the nucleus. The protein localises to the chromosome. Histones H1 are necessary for the condensation of nucleosome chains into higher-order structures. This Tetrahymena pyriformis protein is Histone H1 (HHO).